Here is a 319-residue protein sequence, read N- to C-terminus: N-acetyl-D-glucosamine kinase (319 aa).

An ATP-binding site is contributed by threonine 14. Asparagine 37 and aspartate 113 together coordinate substrate. Residue threonine 135 coordinates ATP. Substrate-binding positions include 153-155 and aspartate 160; that span reads GWG. Position 220 (alanine 220) interacts with ATP.

Belongs to the eukaryotic-type N-acetylglucosamine kinase family. Homodimer.

The enzyme catalyses N-acetyl-D-glucosamine + ATP = N-acetyl-D-glucosamine 6-phosphate + ADP + H(+). In terms of biological role, converts N-acetylglucosamine (GlcNAc), a major component of complex carbohydrates, into GlcNAc 6-phosphate. Also has ManNAc kinase activity. In Dictyostelium discoideum (Social amoeba), this protein is N-acetyl-D-glucosamine kinase (nagk).